Reading from the N-terminus, the 132-residue chain is Holo-[acyl-carrier-protein] synthase (132 aa).

Asp-8 and Glu-62 together coordinate Mg(2+).

The protein belongs to the P-Pant transferase superfamily. AcpS family. The cofactor is Mg(2+).

Its subcellular location is the cytoplasm. The enzyme catalyses apo-[ACP] + CoA = holo-[ACP] + adenosine 3',5'-bisphosphate + H(+). Its function is as follows. Transfers the 4'-phosphopantetheine moiety from coenzyme A to a Ser of acyl-carrier-protein. The protein is Holo-[acyl-carrier-protein] synthase of Methylibium petroleiphilum (strain ATCC BAA-1232 / LMG 22953 / PM1).